The sequence spans 224 residues: 7-cyano-7-deazaguanine synthase (224 aa).

Residue 10–20 (LSGGLDSATVA) participates in ATP binding. The Zn(2+) site is built by cysteine 189, cysteine 199, cysteine 202, and cysteine 205.

It belongs to the QueC family. It depends on Zn(2+) as a cofactor.

The catalysed reaction is 7-carboxy-7-deazaguanine + NH4(+) + ATP = 7-cyano-7-deazaguanine + ADP + phosphate + H2O + H(+). It participates in purine metabolism; 7-cyano-7-deazaguanine biosynthesis. In terms of biological role, catalyzes the ATP-dependent conversion of 7-carboxy-7-deazaguanine (CDG) to 7-cyano-7-deazaguanine (preQ(0)). This Azotobacter vinelandii (strain DJ / ATCC BAA-1303) protein is 7-cyano-7-deazaguanine synthase.